Consider the following 207-residue polypeptide: Calcipressin-like protein (207 aa).

Residues 176–181 (PAIIVH) form a required for tax-6 interaction region.

It belongs to the RCAN family. Interacts with tax-6 (via catalytic domain); the interaction is calcium-dependent. As to expression, expressed in lateral hypodermal cells, marginal cells of the pharynx, vulva epithelial cells, ventral and dorsal nerve cords and commissures and various neurons in the anterior and posterior regions. Expressed in male tail structures including the diagonal muscles, sensory rays and spicules. Expressed in PHC neurons and most tail neurons and support cells of the phasmid neurons. Also expressed in pharyngeal muscle, head neurons, excretory canal cells and hypodermal seam cells.

Its function is as follows. Inhibits tax-6/calcineurin A phosphatase activity and thereby negatively regulates calcineurin-mediated functions. Plays a role in modulating temperature-dependent calcium responses in AFD neurons and in addition, also negatively regulates thermotaxis in a tax-6-dependent manner in AFD neurons. In response to changes in intracellular calcium levels may also regulate nuclear translocation of transcriptional regulators such as crtc-1. May play a role in regulating body size. Plays a role in male tail tip morphogenesis. In Caenorhabditis elegans, this protein is Calcipressin-like protein.